A 105-amino-acid chain; its full sequence is Putative pterin-4-alpha-carbinolamine dehydratase (105 aa).

Belongs to the pterin-4-alpha-carbinolamine dehydratase family.

The catalysed reaction is (4aS,6R)-4a-hydroxy-L-erythro-5,6,7,8-tetrahydrobiopterin = (6R)-L-erythro-6,7-dihydrobiopterin + H2O. This chain is Putative pterin-4-alpha-carbinolamine dehydratase, found in Sinorhizobium fredii (strain NBRC 101917 / NGR234).